We begin with the raw amino-acid sequence, 236 residues long: 2-C-methyl-D-erythritol 4-phosphate cytidylyltransferase (236 aa).

It belongs to the IspD/TarI cytidylyltransferase family. IspD subfamily. As to quaternary structure, homodimer.

It catalyses the reaction 2-C-methyl-D-erythritol 4-phosphate + CTP + H(+) = 4-CDP-2-C-methyl-D-erythritol + diphosphate. It functions in the pathway isoprenoid biosynthesis; isopentenyl diphosphate biosynthesis via DXP pathway; isopentenyl diphosphate from 1-deoxy-D-xylulose 5-phosphate: step 2/6. Its function is as follows. Catalyzes the formation of 4-diphosphocytidyl-2-C-methyl-D-erythritol from CTP and 2-C-methyl-D-erythritol 4-phosphate (MEP). This chain is 2-C-methyl-D-erythritol 4-phosphate cytidylyltransferase, found in Salmonella newport (strain SL254).